Reading from the N-terminus, the 209-residue chain is MKILIASSHGYKVRETKAFLKKLGEFDIFSLVDYPSYQPPKETGETPEENAIQKGLFAAQTFRCWTIADDSMLIIPALGGLPGKLSASFAGEQANDKDHRKKLLENMRLLENTIDRSAYFECCVALISPFGKIFKAHASCEGTIAFEERGSSGFGYDPLFVKHDYKQTYAELPEAIKNQVSHRAKALVKLQPYVETVLANHLLAGKESL.

7–12 (SSHGYK) serves as a coordination point for substrate. The Proton acceptor role is filled by aspartate 70. Residue aspartate 70 coordinates Mg(2+). Substrate-binding positions include serine 71, 154–157 (FGYD), lysine 177, and 182–183 (HR).

This sequence belongs to the HAM1 NTPase family. In terms of assembly, homodimer. Requires Mg(2+) as cofactor.

The catalysed reaction is XTP + H2O = XMP + diphosphate + H(+). It catalyses the reaction dITP + H2O = dIMP + diphosphate + H(+). The enzyme catalyses ITP + H2O = IMP + diphosphate + H(+). In terms of biological role, pyrophosphatase that catalyzes the hydrolysis of nucleoside triphosphates to their monophosphate derivatives, with a high preference for the non-canonical purine nucleotides XTP (xanthosine triphosphate), dITP (deoxyinosine triphosphate) and ITP. Seems to function as a house-cleaning enzyme that removes non-canonical purine nucleotides from the nucleotide pool, thus preventing their incorporation into DNA/RNA and avoiding chromosomal lesions. This is dITP/XTP pyrophosphatase from Chlamydia trachomatis serovar L2 (strain ATCC VR-902B / DSM 19102 / 434/Bu).